A 291-amino-acid polypeptide reads, in one-letter code: Lipoyl synthase (291 aa).

[4Fe-4S] cluster-binding residues include Cys-35, Cys-40, Cys-46, Cys-61, Cys-65, Cys-68, and Ser-273. In terms of domain architecture, Radical SAM core spans 47–262 (FGKRQATFLI…KERALTMGFE (216 aa)).

Belongs to the radical SAM superfamily. Lipoyl synthase family. [4Fe-4S] cluster serves as cofactor.

The protein resides in the cytoplasm. It carries out the reaction [[Fe-S] cluster scaffold protein carrying a second [4Fe-4S](2+) cluster] + N(6)-octanoyl-L-lysyl-[protein] + 2 oxidized [2Fe-2S]-[ferredoxin] + 2 S-adenosyl-L-methionine + 4 H(+) = [[Fe-S] cluster scaffold protein] + N(6)-[(R)-dihydrolipoyl]-L-lysyl-[protein] + 4 Fe(3+) + 2 hydrogen sulfide + 2 5'-deoxyadenosine + 2 L-methionine + 2 reduced [2Fe-2S]-[ferredoxin]. The protein operates within protein modification; protein lipoylation via endogenous pathway; protein N(6)-(lipoyl)lysine from octanoyl-[acyl-carrier-protein]: step 2/2. Functionally, catalyzes the radical-mediated insertion of two sulfur atoms into the C-6 and C-8 positions of the octanoyl moiety bound to the lipoyl domains of lipoate-dependent enzymes, thereby converting the octanoylated domains into lipoylated derivatives. The protein is Lipoyl synthase of Citrifermentans bemidjiense (strain ATCC BAA-1014 / DSM 16622 / JCM 12645 / Bem) (Geobacter bemidjiensis).